Reading from the N-terminus, the 483-residue chain is Uroporphyrinogen-III C-methyltransferase (483 aa).

The protein belongs to the precorrin methyltransferase family.

The catalysed reaction is uroporphyrinogen III + 2 S-adenosyl-L-methionine = precorrin-2 + 2 S-adenosyl-L-homocysteine + H(+). The polypeptide is Uroporphyrinogen-III C-methyltransferase (nasF) (Bacillus subtilis (strain 168)).